The sequence spans 516 residues: Putative GTP-binding protein 6 (516 aa).

The segment covering 18–39 (GRGRSAPRAAAPSCPARALAAV) has biased composition (low complexity). The tract at residues 18 to 82 (GRGRSAPRAA…PEDADENAEE (65 aa)) is disordered. Basic and acidic residues predominate over residues 57 to 67 (LRADGGRSRTG). Positions 68-82 (DDEEEPEDADENAEE) are enriched in acidic residues. Residues 295 to 459 (PVISVVGYTN…ELDAAVLKAT (165 aa)) enclose the Hflx-type G domain. GTP-binding positions include 301-308 (GYTNCGKT), 327-331 (FATLD), 349-352 (DTIG), 418-421 (NKVD), and 437-439 (SAL). Residues Thr308 and Thr329 each contribute to the Mg(2+) site.

Belongs to the TRAFAC class OBG-HflX-like GTPase superfamily. HflX GTPase family. It depends on Mg(2+) as a cofactor. As to expression, ubiquitously expressed.

The sequence is that of Putative GTP-binding protein 6 (GTPBP6) from Homo sapiens (Human).